We begin with the raw amino-acid sequence, 165 residues long: MAQDPSFDIVSKLERPELQNAVSQAMTEIQTRFDFKGSNSEIKITDDQLVLTSENEIKLKQVIDVLTTKMAKRGIGLKAFDFDSKVESATGQTVRMKVKIQNGLDKEQTKQITTLIKDQKLKVQATIQGDSVRVVGKKKDDLQEVMAAIRNANFNFDANFTNFKG.

Belongs to the YajQ family.

Functionally, nucleotide-binding protein. The chain is Nucleotide-binding protein LBF_1338 from Leptospira biflexa serovar Patoc (strain Patoc 1 / Ames).